The sequence spans 351 residues: 3-dehydroquinate synthase (351 aa).

Residues 60-65 (DGEEYK), 94-98 (GVISD), 118-119 (TT), Lys-131, Lys-140, and 158-161 (FLKT) each bind NAD(+). 3 residues coordinate Zn(2+): Glu-173, His-239, and His-256.

The protein belongs to the sugar phosphate cyclases superfamily. Dehydroquinate synthase family. NAD(+) is required as a cofactor. Co(2+) serves as cofactor. It depends on Zn(2+) as a cofactor.

It localises to the cytoplasm. It catalyses the reaction 7-phospho-2-dehydro-3-deoxy-D-arabino-heptonate = 3-dehydroquinate + phosphate. It functions in the pathway metabolic intermediate biosynthesis; chorismate biosynthesis; chorismate from D-erythrose 4-phosphate and phosphoenolpyruvate: step 2/7. Its function is as follows. Catalyzes the conversion of 3-deoxy-D-arabino-heptulosonate 7-phosphate (DAHP) to dehydroquinate (DHQ). The chain is 3-dehydroquinate synthase from Campylobacter jejuni subsp. jejuni serotype O:2 (strain ATCC 700819 / NCTC 11168).